A 287-amino-acid chain; its full sequence is MKIFVPATSANMGPGFDCLGTAVSMFLELDVLETSDKWFVEHDMSGISHDESNLIVKTALELAPKLTPHRLSVKSQIPLSRGLGSSSTAIVAGIELANQLANLNLSQQDKCKIAAKIEGHPDNVMPAILGGMVVASKIEDQYYFQELPLIPFDFLAYIPNYELDTKASRNALPEKLPFKNATHASSILGTLTASLALQDYGTAKRLIEADEFHEPYRQKLVPELVKIRKIAHQHEAFATYLSGAGSTVMTTIEHSRTEEFIASLRKAGLDDRIEQLKASSQGVFIEK.

78–88 (PLSRGLGSSST) provides a ligand contact to ATP.

Belongs to the GHMP kinase family. Homoserine kinase subfamily.

The protein localises to the cytoplasm. It carries out the reaction L-homoserine + ATP = O-phospho-L-homoserine + ADP + H(+). The protein operates within amino-acid biosynthesis; L-threonine biosynthesis; L-threonine from L-aspartate: step 4/5. Functionally, catalyzes the ATP-dependent phosphorylation of L-homoserine to L-homoserine phosphate. This is Homoserine kinase from Lactobacillus gasseri (strain ATCC 33323 / DSM 20243 / BCRC 14619 / CIP 102991 / JCM 1131 / KCTC 3163 / NCIMB 11718 / NCTC 13722 / AM63).